We begin with the raw amino-acid sequence, 180 residues long: Small ribosomal subunit protein uS5 (180 aa).

Residues 1-20 form a disordered region; the sequence is MAKMQGRMQGKVAPGDDRGD. In terms of domain architecture, S5 DRBM spans 22-85; sequence LKEKMVAINR…DEARRKMIKV (64 aa).

This sequence belongs to the universal ribosomal protein uS5 family. Part of the 30S ribosomal subunit. Contacts proteins S4 and S8.

Its function is as follows. With S4 and S12 plays an important role in translational accuracy. In terms of biological role, located at the back of the 30S subunit body where it stabilizes the conformation of the head with respect to the body. The polypeptide is Small ribosomal subunit protein uS5 (Nitrosospira multiformis (strain ATCC 25196 / NCIMB 11849 / C 71)).